The primary structure comprises 415 residues: Zinc finger protein ZFMSA12A (415 aa).

Residues 1 to 36 (MGIQDARWPSEDEETHLLDSSSAEQTRGEKCSDSTP) form a disordered region. 12 C2H2-type zinc fingers span residues 78 to 100 (HKCT…QRLH), 106 to 129 (YRCS…RTQC), 134 to 156 (YICI…QCVH), 161 to 183 (FDCS…ELTH), 189 to 211 (FTCR…QKIH), 217 to 239 (NQCM…EVRH), 245 to 267 (QICA…MRSH), 273 to 295 (FQCT…VRTH), 301 to 323 (YLCS…RRTH), 329 to 351 (YKCS…MRVH), 357 to 379 (YVCS…SMNH), and 385 to 407 (YACQ…LKTH).

The protein resides in the nucleus. In Micropterus salmoides (Largemouth bass), this protein is Zinc finger protein ZFMSA12A.